Here is a 443-residue protein sequence, read N- to C-terminus: Toxin YjjJ (443 aa).

Catalysis depends on D342, which acts as the Proton acceptor.

This sequence belongs to the HipA Ser/Thr kinase family.

Its function is as follows. Toxic when overexpressed in E.coli, leading to long filamentous cells. The toxic effect is neutralized by non-cognate antitoxin HipB. Does not seem to inhibit DNA, RNA or protein synthesis, and unlike paralogous toxin HipA its toxic activity is not counteracted by overexpression of GltX. Binds DNA. Might be a protein kinase. In Escherichia coli (strain K12), this protein is Toxin YjjJ (yjjJ).